The primary structure comprises 393 residues: Probable N-acetyl-LL-diaminopimelate aminotransferase (393 aa).

Residue lysine 231 is modified to N6-(pyridoxal phosphate)lysine.

Belongs to the class-I pyridoxal-phosphate-dependent aminotransferase family. In terms of assembly, homodimer. Requires pyridoxal 5'-phosphate as cofactor.

The protein localises to the cytoplasm. The enzyme catalyses N-acetyl-(2S,6S)-2,6-diaminopimelate + 2-oxoglutarate = L-2-acetamido-6-oxoheptanedioate + L-glutamate. Its pathway is amino-acid biosynthesis; L-lysine biosynthesis via DAP pathway; LL-2,6-diaminopimelate from (S)-tetrahydrodipicolinate (acetylase route): step 2/3. Essential for murein biosynthesis. Probably catalyzes the conversion of L-2-acetamido-6-oxopimelate to N-acetyl-LL-2,6-diaminopimelate. This chain is Probable N-acetyl-LL-diaminopimelate aminotransferase, found in Bacillus subtilis (strain 168).